The primary structure comprises 222 residues: IVGGKDAPVGKYPYQVSLRLSGSHRCGASILDNNNVLTAAHCVDGLSNLNRLKVHVGTNYLSESGDVYDVEDAVVNKNYDDFLLRNDVALVHLTNPIKFNDLVQPIKLSTNDEDLESNPCTLTGWGSTRLGGNTPNALQEIELIVHPQKQCERDQWRVIDSHICTLTKRGEGACHGDSGGPLVANGAQIGIVSFGSPCALGEPDVYTRVSSFVSWINANLKK.

In terms of domain architecture, Peptidase S1 spans 1–221 (IVGGKDAPVG…FVSWINANLK (221 aa)). Cys26 and Cys42 are disulfide-bonded. Active-site charge relay system residues include His41 and Asp87. 2 disulfide bridges follow: Cys151/Cys164 and Cys174/Cys198. Ser178 acts as the Charge relay system in catalysis.

Belongs to the peptidase S1 family.

It localises to the secreted. Its subcellular location is the extracellular space. It carries out the reaction Preferential cleavage: Tyr-|-Xaa, Trp-|-Xaa, Phe-|-Xaa, Leu-|-Xaa.. The sequence is that of Chymotrypsin-1 from Solenopsis invicta (Red imported fire ant).